Here is a 646-residue protein sequence, read N- to C-terminus: UvrABC system protein B (646 aa).

A Helicase ATP-binding domain is found at Leu29–Arg411. Gly42 to Thr49 is an ATP binding site. A Beta-hairpin motif is present at residues Tyr95–Ile118. Positions Gln428–Ile590 constitute a Helicase C-terminal domain. The UVR domain maps to Pro609–Lys644.

The protein belongs to the UvrB family. As to quaternary structure, forms a heterotetramer with UvrA during the search for lesions. Interacts with UvrC in an incision complex.

It is found in the cytoplasm. Its function is as follows. The UvrABC repair system catalyzes the recognition and processing of DNA lesions. A damage recognition complex composed of 2 UvrA and 2 UvrB subunits scans DNA for abnormalities. Upon binding of the UvrA(2)B(2) complex to a putative damaged site, the DNA wraps around one UvrB monomer. DNA wrap is dependent on ATP binding by UvrB and probably causes local melting of the DNA helix, facilitating insertion of UvrB beta-hairpin between the DNA strands. Then UvrB probes one DNA strand for the presence of a lesion. If a lesion is found the UvrA subunits dissociate and the UvrB-DNA preincision complex is formed. This complex is subsequently bound by UvrC and the second UvrB is released. If no lesion is found, the DNA wraps around the other UvrB subunit that will check the other stand for damage. The sequence is that of UvrABC system protein B from Methanococcus maripaludis (strain DSM 14266 / JCM 13030 / NBRC 101832 / S2 / LL).